The following is a 119-amino-acid chain: Large ribosomal subunit protein uL22 (119 aa).

The protein belongs to the universal ribosomal protein uL22 family. Part of the 50S ribosomal subunit.

This protein binds specifically to 23S rRNA; its binding is stimulated by other ribosomal proteins, e.g. L4, L17, and L20. It is important during the early stages of 50S assembly. It makes multiple contacts with different domains of the 23S rRNA in the assembled 50S subunit and ribosome. In terms of biological role, the globular domain of the protein is located near the polypeptide exit tunnel on the outside of the subunit, while an extended beta-hairpin is found that lines the wall of the exit tunnel in the center of the 70S ribosome. In Bifidobacterium adolescentis (strain ATCC 15703 / DSM 20083 / NCTC 11814 / E194a), this protein is Large ribosomal subunit protein uL22.